The sequence spans 364 residues: DNA replication and repair protein RecF (364 aa).

30–37 lines the ATP pocket; the sequence is GDNAQGKT.

It belongs to the RecF family.

It localises to the cytoplasm. In terms of biological role, the RecF protein is involved in DNA metabolism; it is required for DNA replication and normal SOS inducibility. RecF binds preferentially to single-stranded, linear DNA. It also seems to bind ATP. The polypeptide is DNA replication and repair protein RecF (Clostridium kluyveri (strain ATCC 8527 / DSM 555 / NBRC 12016 / NCIMB 10680 / K1)).